Here is a 214-residue protein sequence, read N- to C-terminus: Thymidylate kinase (214 aa).

Residue 10-17 (GGEGVGKT) coordinates ATP.

It belongs to the thymidylate kinase family.

The enzyme catalyses dTMP + ATP = dTDP + ADP. In terms of biological role, phosphorylation of dTMP to form dTDP in both de novo and salvage pathways of dTTP synthesis. In Bartonella quintana (strain Toulouse) (Rochalimaea quintana), this protein is Thymidylate kinase.